A 693-amino-acid chain; its full sequence is Glycine--tRNA ligase beta subunit (693 aa).

It belongs to the class-II aminoacyl-tRNA synthetase family. As to quaternary structure, tetramer of two alpha and two beta subunits.

It localises to the cytoplasm. The catalysed reaction is tRNA(Gly) + glycine + ATP = glycyl-tRNA(Gly) + AMP + diphosphate. This is Glycine--tRNA ligase beta subunit from Vibrio campbellii (strain ATCC BAA-1116).